The chain runs to 274 residues: Protein YeeZ (274 aa).

The first 24 residues, Met1 to Gly24, serve as a signal peptide directing secretion. ATP is bound at residue Gly170–Thr177.

The protein is Protein YeeZ (yeeZ) of Escherichia coli O157:H7.